We begin with the raw amino-acid sequence, 391 residues long: 3-ketoacyl-CoA thiolase (391 aa).

The Acyl-thioester intermediate role is filled by C95. Residues H347 and C377 each act as proton acceptor in the active site.

This sequence belongs to the thiolase-like superfamily. Thiolase family. In terms of assembly, heterotetramer of two alpha chains (FadB) and two beta chains (FadA).

The protein resides in the cytoplasm. The enzyme catalyses an acyl-CoA + acetyl-CoA = a 3-oxoacyl-CoA + CoA. Its pathway is lipid metabolism; fatty acid beta-oxidation. In terms of biological role, catalyzes the final step of fatty acid oxidation in which acetyl-CoA is released and the CoA ester of a fatty acid two carbons shorter is formed. The sequence is that of 3-ketoacyl-CoA thiolase from Vibrio parahaemolyticus serotype O3:K6 (strain RIMD 2210633).